The chain runs to 394 residues: MEFRIGEALIGEGFEVAHVDLIIGTKDSPAGIAFANALANLSAGHTPLLAVLRPNLITKPPAVIVPKVTVKDMHQAELIFGPAQAAVAKAVADAVEEGIIPRERADEYVVVASVFIHPNAKNKHKIYYYNYGATKLAIKRAMQNFPDVDTVLYEKDRSFHPFVGRKLTKLWDPPYLQIAIDIPDLGEVLKVLEQIPDSDHIVFEVGTPLAKRYGCEVILKLREVKPDAFYILDLKTLDVGNLEARMAADATANAVVISGLAPTSTIVKGIREAEKTGILSYVDMMNVDDPIKRLEEIQKAGVLPNVVELHRAIDSEDKEPPWMLAGKIKEKFSVLVAVAGGIRPENVEEVIAAGADIIVVGRAVTKARDVEGAVRKFMSHMKPDTDQFRIMTDF.

The segment at 1 to 162 is formaldehyde-activating enzyme; it reads MEFRIGEALI…YEKDRSFHPF (162 aa). H18 acts as the Proton donor in catalysis. Positions 20, 49, 67, 69, and 84 each coordinate substrate. Residues 163-394 are 3-hexulose-6-phosphate synthase; the sequence is VGRKLTKLWD…TDQFRIMTDF (232 aa).

The protein in the N-terminal section; belongs to the formaldehyde-activating enzyme family. This sequence in the C-terminal section; belongs to the HPS/KGPDC family. HPS subfamily.

The enzyme catalyses 5,6,7,8-tetrahydromethanopterin + formaldehyde = 5,10-methylenetetrahydromethanopterin + H2O. It catalyses the reaction D-ribulose 5-phosphate + formaldehyde = D-arabino-hex-3-ulose 6-phosphate. Its pathway is carbohydrate biosynthesis; D-ribose 5-phosphate biosynthesis. Catalyzes the condensation of formaldehyde with tetrahydromethanopterin (H(4)MPT) to 5,10-methylenetetrahydromethanopterin. Functionally, catalyzes the reversible formation of ribulose-5-phosphate and formaldehyde from 3-hexulose-6-phosphate. The sequence is that of Bifunctional enzyme Fae/Hps from Archaeoglobus fulgidus (strain ATCC 49558 / DSM 4304 / JCM 9628 / NBRC 100126 / VC-16).